The primary structure comprises 600 residues: Elongation factor 4 (600 aa).

The region spanning 5 to 187 (KYIRNFSIIA…AIVNKLHPPK (183 aa)) is the tr-type G domain. Residues 17–22 (DHGKST) and 134–137 (NKID) contribute to the GTP site.

It belongs to the TRAFAC class translation factor GTPase superfamily. Classic translation factor GTPase family. LepA subfamily.

It localises to the cell inner membrane. It catalyses the reaction GTP + H2O = GDP + phosphate + H(+). Its function is as follows. Required for accurate and efficient protein synthesis under certain stress conditions. May act as a fidelity factor of the translation reaction, by catalyzing a one-codon backward translocation of tRNAs on improperly translocated ribosomes. Back-translocation proceeds from a post-translocation (POST) complex to a pre-translocation (PRE) complex, thus giving elongation factor G a second chance to translocate the tRNAs correctly. Binds to ribosomes in a GTP-dependent manner. This is Elongation factor 4 from Rickettsia akari (strain Hartford).